The primary structure comprises 712 residues: U11/U12 small nuclear ribonucleoprotein 48 kDa protein (712 aa).

Residues Phe-98–Leu-125 form a CHHC U11-48K-type zinc finger. The Zn(2+) site is built by Cys-101, His-107, His-117, and Cys-121. Residues Gln-562–Glu-712 are disordered. Composition is skewed to basic and acidic residues over residues Lys-585–Ile-595, Gln-603–Tyr-614, Lys-629–Glu-663, Ser-672–Ser-693, and Phe-702–Glu-712.

As to quaternary structure, component of the U11/U12 snRNPs that are part of the U12-type spliceosome. Not found in the major spliceosome.

The protein localises to the nucleus. Likely involved in U12-type 5' splice site recognition. The polypeptide is U11/U12 small nuclear ribonucleoprotein 48 kDa protein (SNRNP48) (Arabidopsis thaliana (Mouse-ear cress)).